The following is a 61-amino-acid chain: Small ribosomal subunit protein uS14B (61 aa).

Zn(2+) contacts are provided by C24, C27, C40, and C43.

This sequence belongs to the universal ribosomal protein uS14 family. Zinc-binding uS14 subfamily. As to quaternary structure, part of the 30S ribosomal subunit. Contacts proteins S3 and S10. Zn(2+) is required as a cofactor.

Binds 16S rRNA, required for the assembly of 30S particles and may also be responsible for determining the conformation of the 16S rRNA at the A site. In Levilactobacillus brevis (strain ATCC 367 / BCRC 12310 / CIP 105137 / JCM 1170 / LMG 11437 / NCIMB 947 / NCTC 947) (Lactobacillus brevis), this protein is Small ribosomal subunit protein uS14B.